Reading from the N-terminus, the 1167-residue chain is C5a peptidase (1167 aa).

An N-terminal signal peptide occupies residues 1 to 31; it reads MRKKQKLPFDKLAIALMSTSILLNAQSDIKA. Positions 34-52 are enriched in polar residues; that stretch reads VTEDTPVTEQAVETPQPTA. The disordered stretch occupies residues 34-73; it reads VTEDTPVTEQAVETPQPTAVSEEVPSSKETKTPQTPDDAE. In terms of domain architecture, Peptidase S8 spans 99–581; the sequence is KATIRDLNDP…AGAVDAKKAS (483 aa). Catalysis depends on charge relay system residues Asp-130, His-193, and Ser-512. The interval 1029 to 1133 is disordered; the sequence is EGHSNKPEQD…RDQLPTTNDK (105 aa). A run of 4 repeats spans residues 1034–1050, 1051–1067, 1068–1084, and 1085–1101. The segment at 1034–1101 is 4 X 17 AA tandem repeats; that stretch reads KPEQDGSGQT…GQTPGKTPQK (68 aa). 2 stretches are compositionally biased toward basic and acidic residues: residues 1044–1071 and 1078–1090; these read PDKKPEAKPEQDGSDQAPDKKPEAKPEQ and PDKKPETKPEKDS. Polar residues-rich tracts occupy residues 1092 to 1106 and 1120 to 1130; these read GQTPGKTPQKGQPSR and KASTRDQLPTT. The LPXTG sorting signal signature appears at 1127-1131; that stretch reads LPTTN. The residue at position 1130 (Thr-1130) is a Pentaglycyl murein peptidoglycan amidated threonine. A propeptide spans 1131-1167 (removed by sortase); that stretch reads NDKDTNRLHLLKLVMTTFFFGLVAHIFKTKRQKETKK.

This sequence belongs to the peptidase S8 family. In terms of processing, cleaved by SpeB protease; leading to its degradation. Degradation by SpeB is probably strictly regulated to preserve integrity of C5a peptidase.

The protein localises to the secreted. It localises to the cell wall. It catalyses the reaction The primary cleavage site is at 67-His-|-Lys-68 in human C5a with a minor secondary cleavage site at 58-Ala-|-Ser-59.. In terms of biological role, this virulence factor of S.pyogenes specifically cleaves the human serum chemotaxin C5a at '68-Lys-|-Asp-69' bond near its C-terminus, destroying its ability to serve as a chemoattractant. The sequence is that of C5a peptidase (scpA) from Streptococcus pyogenes.